An 898-amino-acid chain; its full sequence is Nitrate reductase [NAD(P)H] (898 aa).

Positions 1-15 (MAASVENRRFTHHEP) are enriched in basic and acidic residues. Positions 1-65 (MAASVENRRF…SSSEDENEND (65 aa)) are disordered. Cys-180 is a Mo-molybdopterin binding site. A Cytochrome b5 heme-binding domain is found at 528–603 (SKMFSMSEVK…LEDYRIGELI (76 aa)). Residues His-563 and His-586 each coordinate heme. In terms of domain architecture, FAD-binding FR-type spans 642–754 (GAKIPTKLVY…KGPLGHVEYT (113 aa)). FAD is bound by residues 694 to 697 (RAYT), 711 to 715 (VVKIY), Phe-716, Phe-723, 728 to 730 (LMS), and Thr-781.

The protein belongs to the nitrate reductase family. In terms of assembly, homodimer. It depends on FAD as a cofactor. Requires heme as cofactor. Mo-molybdopterin is required as a cofactor.

The catalysed reaction is nitrite + NAD(+) + H2O = nitrate + NADH + H(+). It carries out the reaction nitrite + NADP(+) + H2O = nitrate + NADPH + H(+). Functionally, nitrate reductase is a key enzyme involved in the first step of nitrate assimilation in plants, fungi and bacteria. The chain is Nitrate reductase [NAD(P)H] (NIA1) from Betula pendula (European white birch).